The chain runs to 421 residues: Leucine-rich repeat-containing protein 42 (421 aa).

LRR repeat units follow at residues 149 to 170 (VLCS…EEIK), 174 to 195 (ELTR…LEHL), 202 to 222 (SVTQ…RKMT), 234 to 255 (NLTL…GYLF), and 259 to 280 (KLNC…KDKL). Positions 374–406 (HEPLLSQESKKSKKRAFEESEQEQSSPQSAKQK) are disordered. The residue at position 399 (Ser-399) is a Phosphoserine.

This sequence belongs to the LRRC42 family.

In Rattus norvegicus (Rat), this protein is Leucine-rich repeat-containing protein 42 (Lrrc42).